Consider the following 135-residue polypeptide: Small ribosomal subunit protein uS11 (135 aa).

Residues 1 to 20 (MGRQRQQRSRGSRSRRRVRK) form a disordered region.

It belongs to the universal ribosomal protein uS11 family. As to quaternary structure, part of the 30S ribosomal subunit. Interacts with proteins S7 and S18. Binds to IF-3.

Its function is as follows. Located on the platform of the 30S subunit, it bridges several disparate RNA helices of the 16S rRNA. Forms part of the Shine-Dalgarno cleft in the 70S ribosome. The chain is Small ribosomal subunit protein uS11 from Rubrobacter xylanophilus (strain DSM 9941 / JCM 11954 / NBRC 16129 / PRD-1).